A 315-amino-acid chain; its full sequence is Lipoyl synthase (315 aa).

Residues Cys62, Cys67, Cys73, Cys88, Cys92, Cys95, and Ser302 each contribute to the [4Fe-4S] cluster site. The region spanning 74–292 is the Radical SAM core domain; sequence FNHGTATFMI…KIALKLGFIR (219 aa).

The protein belongs to the radical SAM superfamily. Lipoyl synthase family. [4Fe-4S] cluster is required as a cofactor.

The protein localises to the cytoplasm. It carries out the reaction [[Fe-S] cluster scaffold protein carrying a second [4Fe-4S](2+) cluster] + N(6)-octanoyl-L-lysyl-[protein] + 2 oxidized [2Fe-2S]-[ferredoxin] + 2 S-adenosyl-L-methionine + 4 H(+) = [[Fe-S] cluster scaffold protein] + N(6)-[(R)-dihydrolipoyl]-L-lysyl-[protein] + 4 Fe(3+) + 2 hydrogen sulfide + 2 5'-deoxyadenosine + 2 L-methionine + 2 reduced [2Fe-2S]-[ferredoxin]. It functions in the pathway protein modification; protein lipoylation via endogenous pathway; protein N(6)-(lipoyl)lysine from octanoyl-[acyl-carrier-protein]: step 2/2. Catalyzes the radical-mediated insertion of two sulfur atoms into the C-6 and C-8 positions of the octanoyl moiety bound to the lipoyl domains of lipoate-dependent enzymes, thereby converting the octanoylated domains into lipoylated derivatives. The sequence is that of Lipoyl synthase from Vesicomyosocius okutanii subsp. Calyptogena okutanii (strain HA).